Here is a 122-residue protein sequence, read N- to C-terminus: Probable transcription factor PqrA (122 aa).

One can recognise an HTH araC/xylS-type domain in the interval 7-107 (NDILKWLETQ…NTTPAKFREN (101 aa)). DNA-binding regions (H-T-H motif) lie at residues 26–47 (DTIA…KDFK) and 74–97 (ILDI…KKHF).

In terms of biological role, upon expression in E.coli strain KY2563 confers resistance to antibiotics ofloxacin, ciprofloxacin, tetracycline, chloramphenicol, and ceftazidime (increases minimal inhibitory concentration by 8-32 times); also decreases expression of OmpF. In Proteus vulgaris, this protein is Probable transcription factor PqrA.